We begin with the raw amino-acid sequence, 144 residues long: Prefoldin subunit alpha (144 aa).

Belongs to the prefoldin alpha subunit family. Heterohexamer of two alpha and four beta subunits.

It is found in the cytoplasm. Molecular chaperone capable of stabilizing a range of proteins. Seems to fulfill an ATP-independent, HSP70-like function in archaeal de novo protein folding. The polypeptide is Prefoldin subunit alpha (Methanococcus aeolicus (strain ATCC BAA-1280 / DSM 17508 / OCM 812 / Nankai-3)).